The following is a 423-amino-acid chain: Gamma-glutamyl phosphate reductase (423 aa).

It belongs to the gamma-glutamyl phosphate reductase family.

The protein resides in the cytoplasm. The enzyme catalyses L-glutamate 5-semialdehyde + phosphate + NADP(+) = L-glutamyl 5-phosphate + NADPH + H(+). It functions in the pathway amino-acid biosynthesis; L-proline biosynthesis; L-glutamate 5-semialdehyde from L-glutamate: step 2/2. Functionally, catalyzes the NADPH-dependent reduction of L-glutamate 5-phosphate into L-glutamate 5-semialdehyde and phosphate. The product spontaneously undergoes cyclization to form 1-pyrroline-5-carboxylate. This chain is Gamma-glutamyl phosphate reductase, found in Pseudomonas putida (strain ATCC 700007 / DSM 6899 / JCM 31910 / BCRC 17059 / LMG 24140 / F1).